The following is a 577-amino-acid chain: uncharacterized protein (577 aa).

Composition is skewed to polar residues over residues 1–21 (MSST…QSAS) and 68–87 (SFQN…SKTE). 2 disordered regions span residues 1 to 24 (MSST…SAHP) and 68 to 93 (SFQN…PDDV). 12 helical membrane-spanning segments follow: residues 139–159 (CILA…AVPA), 174–194 (LLTM…WAPL), 204–224 (ILIG…GKDI), 232–252 (FFAG…LADM), 262–282 (ITLF…VGGF), 292–312 (WTEY…YLFC), 367–387 (PICF…YLLL), 402–422 (MGVA…GSGI), 447–467 (LPPM…LSWS), 473–493 (VNWV…LLIF), 504–526 (YLFR…AAGF), and 543–563 (GSLL…FFFF).

This sequence belongs to the major facilitator superfamily. CAR1 family.

The protein localises to the endoplasmic reticulum. The protein resides in the membrane. This is an uncharacterized protein from Schizosaccharomyces pombe (strain 972 / ATCC 24843) (Fission yeast).